The sequence spans 1176 residues: Leucine--tRNA ligase, cytoplasmic (1176 aa).

Tyr52 and Tyr54 together coordinate L-leucine. The 'HIGH' region signature appears at 60-63 (HLGH). Residues 115 to 142 (PDFPDEEDEEEETNVKTEDTRIKDKAKG) form a disordered region. Over residues 117–126 (FPDEEDEEEE) the composition is skewed to acidic residues. Over residues 127 to 139 (TNVKTEDTRIKDK) the composition is skewed to basic and acidic residues. A Phosphoserine modification is found at Ser167. An editing domain region spans residues 260 to 509 (GPQEYTLLKL…DAGDALIYME (250 aa)). L-leucine is bound by residues Leu594 and Ser597. Residues 716-720 (KMSKS) carry the 'KMSKS' region motif. Position 719 (Lys719) interacts with ATP. Ser720 is subject to Phosphoserine. N6-acetyllysine is present on residues Lys970 and Lys1047.

This sequence belongs to the class-I aminoacyl-tRNA synthetase family.

It is found in the cytoplasm. It catalyses the reaction tRNA(Leu) + L-leucine + ATP = L-leucyl-tRNA(Leu) + AMP + diphosphate. The catalysed reaction is L-methionyl-tRNA(Leu) + H2O = tRNA(Leu) + L-methionine + H(+). Its activity is regulated as follows. 5-fluoro-1,3-dihydro-1-hydroxy-1,2-benzoxaborole inhibits LARS1 by forming a covalent adduct with the 3' adenosine of tRNA(Leu) at the editing site, thus locking the enzyme in an inactive conformation. Aminoacyl-tRNA synthetase that catalyzes the specific attachment of leucine to its cognate tRNA (tRNA(Leu)). It performs tRNA aminoacylation in a two-step reaction: Leu is initially activated by ATP to form a leucyl-adenylate (Leu-AMP) intermediate; then the leucyl moiety is transferred to the acceptor 3' end of the tRNA to yield leucyl-tRNA. To improve the fidelity of catalytic reactions, it is also able to hydrolyze misactivated aminoacyl-adenylate intermediates (pre-transfer editing) and mischarged aminoacyl-tRNAs (post-transfer editing). The sequence is that of Leucine--tRNA ligase, cytoplasmic (LARS1) from Pongo abelii (Sumatran orangutan).